A 440-amino-acid polypeptide reads, in one-letter code: Thymidine phosphorylase (440 aa).

The protein belongs to the thymidine/pyrimidine-nucleoside phosphorylase family. Homodimer.

It carries out the reaction thymidine + phosphate = 2-deoxy-alpha-D-ribose 1-phosphate + thymine. It participates in pyrimidine metabolism; dTMP biosynthesis via salvage pathway; dTMP from thymine: step 1/2. Functionally, the enzymes which catalyze the reversible phosphorolysis of pyrimidine nucleosides are involved in the degradation of these compounds and in their utilization as carbon and energy sources, or in the rescue of pyrimidine bases for nucleotide synthesis. The chain is Thymidine phosphorylase from Escherichia coli O127:H6 (strain E2348/69 / EPEC).